Here is a 490-residue protein sequence, read N- to C-terminus: Polyamine oxidase 2 (490 aa).

Residues Glu-57, Arg-65, Val-246, and Glu-433 each contribute to the FAD site. A Microbody targeting signal motif is present at residues 488–490; the sequence is SRL.

Belongs to the flavin monoamine oxidase family. FAD serves as cofactor. In terms of tissue distribution, highly expressed in flowers and siliques. Also found in leaf and stem and in low levels in cotyledons, roots and in seedlings.

Its subcellular location is the peroxisome. It carries out the reaction spermine + O2 + H2O = 3-aminopropanal + spermidine + H2O2. The enzyme catalyses N(1)-acetylspermine + O2 + H2O = 3-acetamidopropanal + spermidine + H2O2. The catalysed reaction is spermidine + O2 + H2O = 3-aminopropanal + putrescine + H2O2. The protein operates within amine and polyamine degradation; spermine degradation. Its pathway is amine and polyamine degradation; spermidine degradation. Its function is as follows. Flavoenzyme involved in polyamine back-conversion. Catalyzes the oxidation of the secondary amino group of polyamines, such as spermine, spermidine and their acetyl derivatives. Substrate preference is N(1)-acetylspermine &gt; spermine &gt; spermidine. Plays an important role in the regulation of polyamine intracellular concentration. Involved in abscisic acid-mediated developmental processes. May contribute to nitric oxide-mediated effects on root growth. This is Polyamine oxidase 2 from Arabidopsis thaliana (Mouse-ear cress).